Here is a 514-residue protein sequence, read N- to C-terminus: Na(+)/H(+) antiporter NhaB (514 aa).

The next 12 membrane-spanning stretches (helical) occupy residues 23 to 43, 52 to 72, 97 to 117, 120 to 140, 144 to 164, 202 to 222, 238 to 258, 303 to 323, 353 to 373, 391 to 411, 447 to 467, and 475 to 495; these read LALL…PFIA, IFTL…LLAI, LLLM…LFIF, LLLS…AAAF, FLDA…FYGI, LMMH…VGEP, FFLR…LTCL, ALIG…VGLI, FTAL…QSLF, LFYL…VGTI, ATPN…APLI, and VWMA…CVEF.

The protein belongs to the NhaB Na(+)/H(+) (TC 2.A.34) antiporter family.

It localises to the cell inner membrane. It carries out the reaction 2 Na(+)(in) + 3 H(+)(out) = 2 Na(+)(out) + 3 H(+)(in). In terms of biological role, na(+)/H(+) antiporter that extrudes sodium in exchange for external protons. This is Na(+)/H(+) antiporter NhaB from Escherichia fergusonii (strain ATCC 35469 / DSM 13698 / CCUG 18766 / IAM 14443 / JCM 21226 / LMG 7866 / NBRC 102419 / NCTC 12128 / CDC 0568-73).